The following is a 532-amino-acid chain: Germ cell nuclear acidic-1 protein (532 aa).

Basic and acidic residues predominate over residues 1 to 10 (MPTPFRDLHN). 3 disordered regions span residues 1 to 50 (MPTP…EPIS), 84 to 181 (REAP…GNFE), and 213 to 253 (YISE…DRKQ). The span at 14–32 (ASASSYETAWSSSFSSRRS) shows a compositional bias: low complexity. Basic and acidic residues-rich tracts occupy residues 39-48 (SNLKEIKDEP), 94-107 (LLQK…RDML), and 124-133 (KPKEVKKALK). Residues 213–235 (YISEESSEEESEEEEEDVDDEEY) show a composition bias toward acidic residues. A compositionally biased stretch (basic and acidic residues) spans 236–251 (RESSPEVEAKISYSDR). The region spanning 308–398 (RRIFSAIPSE…GARCSSVFKS (91 aa)) is the SprT-like domain. The segment at 468-489 (AKPVGPILSNSSKPSPPAPRRI) is disordered.

The protein belongs to the serine-aspartate repeat-containing protein (SDr) family. In terms of assembly, interacts with top-2; this interaction allows the resolution of topoisomerase II (top-2) DNA-protein cross-links. As to expression, mainly expressed in germ cells and early embryonic, proliferating cells.

The protein localises to the chromosome. Functionally, may play a role in DNA-protein cross-links (DPCs) clearance through a SUMO-dependent recruitment to sites of DPCs, ensuring the genomic stability by protecting germ cells and early embryos from various sources of damage. May resolve the topoisomerase II (top-2) DPCs. Limits replication stress and DNA double-strand breaks. This is Germ cell nuclear acidic-1 protein from Caenorhabditis elegans.